Consider the following 701-residue polypeptide: Polyribonucleotide nucleotidyltransferase (701 aa).

2 residues coordinate Mg(2+): Asp485 and Asp491. Positions 552 to 611 (PRITTLKINPEKIRDVIGKGGATIRALTEETGTTIELEDDGTVKIASSNGEATKEAIRRI) constitute a KH domain. Positions 621–689 (GTVYNGKVVR…RQGRVRLSMK (69 aa)) constitute an S1 motif domain.

This sequence belongs to the polyribonucleotide nucleotidyltransferase family. Component of the RNA degradosome, which is a multiprotein complex involved in RNA processing and mRNA degradation. It depends on Mg(2+) as a cofactor.

The protein resides in the cytoplasm. It carries out the reaction RNA(n+1) + phosphate = RNA(n) + a ribonucleoside 5'-diphosphate. Involved in mRNA degradation. Catalyzes the phosphorolysis of single-stranded polyribonucleotides processively in the 3'- to 5'-direction. The polypeptide is Polyribonucleotide nucleotidyltransferase (Shewanella piezotolerans (strain WP3 / JCM 13877)).